Consider the following 196-residue polypeptide: Cilia- and flagella-associated protein 107 (196 aa).

Mn stretches follow at residues 46–61 and 96–108; these read TPQT…FPGH and ISTY…RHNY. Residues 168–196 form a disordered region; it reads YPRPPAGAMSRREHAIPVPPPRLQPVPHF. The segment covering 184-196 has biased composition (pro residues); that stretch reads PVPPPRLQPVPHF.

Microtubule inner protein component of sperm flagellar doublet microtubules. As to expression, expressed in trachea multiciliated cells.

It is found in the cytoplasm. It localises to the cytoskeleton. Its subcellular location is the cilium axoneme. The protein resides in the flagellum axoneme. Its function is as follows. Microtubule inner protein (MIP) part of the dynein-decorated doublet microtubules (DMTs) in cilia axoneme, which is required for motile cilia beating. In Bos taurus (Bovine), this protein is Cilia- and flagella-associated protein 107.